The chain runs to 239 residues: Purine nucleoside phosphorylase DeoD-type (239 aa).

H5 contacts a purine D-ribonucleoside. Phosphate is bound by residues G21, R25, R44, and 88 to 91 (RVGS). Residues 180-182 (EME) and 204-205 (SD) contribute to the a purine D-ribonucleoside site. Catalysis depends on D205, which acts as the Proton donor.

It belongs to the PNP/UDP phosphorylase family. As to quaternary structure, homohexamer; trimer of homodimers.

The enzyme catalyses a purine D-ribonucleoside + phosphate = a purine nucleobase + alpha-D-ribose 1-phosphate. It catalyses the reaction a purine 2'-deoxy-D-ribonucleoside + phosphate = a purine nucleobase + 2-deoxy-alpha-D-ribose 1-phosphate. Catalyzes the reversible phosphorolytic breakdown of the N-glycosidic bond in the beta-(deoxy)ribonucleoside molecules, with the formation of the corresponding free purine bases and pentose-1-phosphate. The sequence is that of Purine nucleoside phosphorylase DeoD-type from Yersinia pestis bv. Antiqua (strain Antiqua).